The primary structure comprises 505 residues: Putative ribose/galactose/methyl galactoside import ATP-binding protein 1 (505 aa).

ABC transporter domains are found at residues 10-245 (LRLE…VGRS) and 256-501 (RPTD…SGYG). 42-49 (GENGAGKS) serves as a coordination point for ATP.

This sequence belongs to the ABC transporter superfamily. Carbohydrate importer 2 (CUT2) (TC 3.A.1.2) family.

Its subcellular location is the cell inner membrane. It carries out the reaction D-ribose(out) + ATP + H2O = D-ribose(in) + ADP + phosphate + H(+). The enzyme catalyses D-galactose(out) + ATP + H2O = D-galactose(in) + ADP + phosphate + H(+). Its function is as follows. Part of an ABC transporter complex involved in carbohydrate import. Could be involved in ribose, galactose and/or methyl galactoside import. Responsible for energy coupling to the transport system. The chain is Putative ribose/galactose/methyl galactoside import ATP-binding protein 1 from Agrobacterium fabrum (strain C58 / ATCC 33970) (Agrobacterium tumefaciens (strain C58)).